Reading from the N-terminus, the 146-residue chain is Neuropeptide Y receptor type 2 (146 aa).

At 1–8 (KMGPVLCH) the chain is on the extracellular side. Cysteines 7 and 87 form a disulfide. A helical membrane pass occupies residues 9-29 (LVPYAQGLAVQVSTITLTVIA). Over 30–49 (LDRHRCIVYHLESKISKQIS) the chain is Cytoplasmic. A helical membrane pass occupies residues 50 to 70 (FLIIGLAWGVSALLASPLAIF). The Extracellular segment spans residues 71 to 100 (REYSLIEIIPDFEIVACTEKWPGEEKGIYG). Residues 101 to 121 (TVYSLLSLLILYVLPLGIISF) traverse the membrane as a helical segment. At 122–146 (SYARIWSKLKNHVSPGAAHDHYHQR) the chain is on the cytoplasmic side.

It belongs to the G-protein coupled receptor 1 family.

The protein resides in the cell membrane. Receptor for neuropeptide Y and peptide YY. In Ovis aries (Sheep), this protein is Neuropeptide Y receptor type 2 (NPY2R).